The chain runs to 97 residues: Mapk-regulated corepressor-interacting protein 1 (97 aa).

Polar residues predominate over residues 1 to 26 (MTSSSTPRMHTYKRTSSPRSPTNTGE). 2 disordered regions span residues 1 to 27 (MTSS…TGEL) and 54 to 97 (QNHE…SKKS). Composition is skewed to basic and acidic residues over residues 54-68 (QNHE…EYVE) and 84-97 (SDLK…SKKS). Residues 80-84 (PVDLS) carry the PXDLS motif motif.

It belongs to the MCRIP family.

It localises to the nucleus. The protein localises to the cytoplasm. The protein resides in the stress granule. Its function is as follows. May play a role in the regulation of the epithelial-mesenchymal transition. The polypeptide is Mapk-regulated corepressor-interacting protein 1 (mcrip1) (Danio rerio (Zebrafish)).